A 183-amino-acid chain; its full sequence is Ribosome rescue factor SmrB (183 aa).

The Smr domain maps to 98–173 (LDLHGLTQLQ…GDAALLVLIE (76 aa)).

This sequence belongs to the SmrB family. Associates with collided ribosomes, but not with correctly translating polysomes.

Acts as a ribosome collision sensor. Detects stalled/collided disomes (pairs of ribosomes where the leading ribosome is stalled and a second ribosome has collided with it) and endonucleolytically cleaves mRNA at the 5' boundary of the stalled ribosome. Stalled/collided disomes form a new interface (primarily via the 30S subunits) that binds SmrB. Cleaved mRNA becomes available for tmRNA ligation, leading to ribosomal subunit dissociation and rescue of stalled ribosomes. The sequence is that of Ribosome rescue factor SmrB from Salmonella arizonae (strain ATCC BAA-731 / CDC346-86 / RSK2980).